The chain runs to 478 residues: Protein trichome birefringence-like 20 (478 aa).

The chain crosses the membrane as a helical; Signal-anchor for type II membrane protein span at residues 10-30 (IGLVIFPLILLTIAPILYLFF). Low complexity predominate over residues 50–68 (SSAISSPSRYNHSSSSSDS). Residues 50–125 (SSAISSPSRY…KEHRRKKRKR (76 aa)) form a disordered region. Residues 92 to 110 (SSSLHNNDRLSISSSNGHH) show a composition bias toward polar residues. The span at 112-125 (VTPKKEHRRKKRKR) shows a compositional bias: basic residues. Residues 200–202 (GDS) carry the GDS motif motif. Positions 447 to 461 (DCVHWCLPGPIDSWN) match the DCXHWCLPGXXDXWN motif motif.

The protein belongs to the PC-esterase family. TBL subfamily.

It is found in the membrane. Its function is as follows. May act as a bridging protein that binds pectin and other cell wall polysaccharides. Probably involved in maintaining esterification of pectins. May be involved in the specific O-acetylation of cell wall polymers. The protein is Protein trichome birefringence-like 20 (TBL20) of Arabidopsis thaliana (Mouse-ear cress).